A 658-amino-acid polypeptide reads, in one-letter code: Endoplasmic reticulum chaperone BiP (658 aa).

The signal sequence occupies residues 1 to 19 (MVTMKLFALVLLVSASVFA). ATP is bound by residues 38 to 41 (GTTY), K98, 228 to 230 (GGT), 294 to 301 (EKAKRALS), and 365 to 368 (GSTR). The segment at 127-281 (KPYIEVDIGD…KKKTGKDVRA (155 aa)) is nucleotide-binding (NBD). The tract at residues 410 to 420 (QDTGDLVLLDV) is interdomain linker. A substrate-binding (SBD) region spans residues 421–501 (CPLTLGIETV…PRGVPQIEVT (81 aa)). The tract at residues 634-658 (KLYGGAGAPPPEGAEGAEETEKDEL) is disordered. A compositionally biased stretch (acidic residues) spans 648-658 (EGAEETEKDEL). Positions 655–658 (KDEL) match the Prevents secretion from ER motif.

It belongs to the heat shock protein 70 family. In terms of assembly, monomer and homooligomer; homooligomerization via the interdomain linker inactivates the chaperone activity and acts as a storage of hspa5/BiP molecules. Interacts with DNAJC10. Interacts with dnajb9/ERdj4; leading to recruit hspa5/BiP to ern1/ire1. Interacts with ern1/ire1; interaction takes place following interaction with dnajb9/ERdj4 and leads to inactivate ern1/IRE1.

Its subcellular location is the endoplasmic reticulum lumen. The catalysed reaction is ATP + H2O = ADP + phosphate + H(+). With respect to regulation, the chaperone activity is regulated by ATP-induced allosteric coupling of the nucleotide-binding (NBD) and substrate-binding (SBD) domains. In the ADP-bound and nucleotide-free (apo) states, the two domains have little interaction. In contrast, in the ATP-bound state the two domains are tightly coupled, which results in drastically accelerated kinetics in both binding and release of polypeptide substrates. J domain-containing co-chaperones (dnajb9/ERdj4 or dnajc10/ERdj5) stimulate the ATPase activity and are required for efficient substrate recognition by hspa5/BiP. Homooligomerization inactivates participating hspa5/BiP protomers and probably act as reservoirs to store hspa5/BiP molecules when they are not needed by the cell. Functionally, endoplasmic reticulum chaperone that plays a key role in protein folding and quality control in the endoplasmic reticulum lumen. Involved in the correct folding of proteins and degradation of misfolded proteins via its interaction with dnajc10/ERdj5, probably to facilitate the release of dnajc10/ERdj5 from its substrate. Acts as a key repressor of the EIF2AK3/PERK and ERN1/IRE1-mediated unfolded protein response (UPR). In the unstressed endoplasmic reticulum, recruited by DNAJB9/ERdj4 to the luminal region of ERN1/IRE1, leading to disrupt the dimerization of ERN1/IRE1, thereby inactivating ERN1/IRE1. Also binds and inactivates EIF2AK3/PERK in unstressed cells. Accumulation of misfolded protein in the endoplasmic reticulum causes release of HSPA5/BiP from ERN1/IRE1 and EIF2AK3/PERK, allowing their homodimerization and subsequent activation. This Xenopus laevis (African clawed frog) protein is Endoplasmic reticulum chaperone BiP.